The sequence spans 388 residues: Interferon alpha/beta receptor 1b (388 aa).

Fibronectin type-III domains lie at 5–102 (LPQP…FCPD) and 109–211 (PPSR…TEGD). Residues 217–237 (IFLYFLVSMMVCFLLVLLSSY) traverse the membrane as a helical segment. Positions 308 to 357 (TAPPSELEQDSGRHIRQDSGDSGIYSTEGGSAQQGRSGGEPIRRDQEVDS) are disordered. Positions 317-326 (DSGRHIRQDS) are enriched in basic and acidic residues. Residues 331–342 (IYSTEGGSAQQG) show a composition bias toward polar residues.

The protein belongs to the type II cytokine receptor family. Heterodimer with IFNAR2; forming the receptor for type I interferon.

It localises to the cell membrane. Its subcellular location is the cytoplasm. The protein localises to the perinuclear region. Its function is as follows. Together with IFNAR2, forms the heterodimeric receptor for type I interferons (including interferons alpha, beta, epsilon, omega and kappa). Type I interferon binding activates the JAK-STAT signaling cascade, resulting in transcriptional activation or repression of interferon-regulated genes that encode the effectors of the interferon response. Mechanistically, type I interferon-binding brings the IFNAR1 and IFNAR2 subunits into close proximity with one another, driving their associated Janus kinases (JAKs) (TYK2 bound to IFNAR1 and JAK1 bound to IFNAR2) to cross-phosphorylate one another. The activated kinases phosphorylate specific tyrosine residues on the intracellular domains of IFNAR1 and IFNAR2, forming docking sites for the STAT transcription factors. STAT proteins are then phosphorylated by the JAKs, promoting their translocation into the nucleus to regulate expression of interferon-regulated genes. The polypeptide is Interferon alpha/beta receptor 1b (Oncorhynchus mykiss (Rainbow trout)).